Consider the following 262-residue polypeptide: uncharacterized protein (262 aa).

6 helical membrane-spanning segments follow: residues 7–27 (LAVA…LAHM), 58–78 (DTLG…IVFG), 114–134 (FLAF…VLGG), 140–160 (GGFQ…IAFG), 179–199 (GALG…YYLF), and 216–236 (IITA…VLAG).

Its subcellular location is the cell membrane. This is an uncharacterized protein from Methanocaldococcus jannaschii (strain ATCC 43067 / DSM 2661 / JAL-1 / JCM 10045 / NBRC 100440) (Methanococcus jannaschii).